The chain runs to 218 residues: Response regulator UvrY (218 aa).

Positions 3–119 (NVLLVDDHEL…EVVSAIRSVY (117 aa)) constitute a Response regulatory domain. The residue at position 54 (Asp-54) is a 4-aspartylphosphate. An HTH luxR-type domain is found at 143–208 (TESPFASLSE…ELTHLAIRHG (66 aa)). The H-T-H motif DNA-binding region spans 167–186 (VNEISEQLNLSPKTVNSYRY).

In terms of processing, phosphorylated and activated by BarA.

It is found in the cytoplasm. Its function is as follows. Member of the two-component regulatory system UvrY/BarA involved in the regulation of carbon metabolism via the CsrA/CsrB regulatory system. UvrY activates the transcription of the untranslated csrB RNA and of barA, in an autoregulatory loop. Mediates the effects of CsrA on csrB RNA by BarA-dependent and BarA-independent mechanisms. This Escherichia coli O157:H7 protein is Response regulator UvrY (uvrY).